The following is a 265-amino-acid chain: MGLRIHFVVDPHGWCCMGLIVFVWLYNFFLIPKIVLFPHYEEGHIPGILIIIFYGIAMFCLVALVRASITDPGRLPENPKIPHGEREFWELCNKCNLMRPKRSHHCSRCGHCVRRMDHHCPWINNCVGEDNHWLFLQLCFYTELLTCYALMFSFCHYYYFLPLKKRNLDLFVVRHELAIMRLAAFMGITMLVGITGLFYTQLIGIITDTTSIEKMSNCCEEISRPRKPWQQTFSEVFGTRWKILWFIPFRRRQPLRVPYHFANHV.

The Cytoplasmic segment spans residues 1–16 (MGLRIHFVVDPHGWCC). The helical transmembrane segment at 17-37 (MGLIVFVWLYNFFLIPKIVLF) threads the bilayer. The Extracellular portion of the chain corresponds to 38–44 (PHYEEGH). The chain crosses the membrane as a helical span at residues 45-65 (IPGILIIIFYGIAMFCLVALV). Residues 66 to 133 (RASITDPGRL…NNCVGEDNHW (68 aa)) lie on the Cytoplasmic side of the membrane. Positions 90 to 140 (ELCNKCNLMRPKRSHHCSRCGHCVRRMDHHCPWINNCVGEDNHWLFLQLCF) constitute a DHHC domain. Cys-120 functions as the S-palmitoyl cysteine intermediate in the catalytic mechanism. Residues 134 to 154 (LFLQLCFYTELLTCYALMFSF) traverse the membrane as a helical segment. The Extracellular portion of the chain corresponds to 155-185 (CHYYYFLPLKKRNLDLFVVRHELAIMRLAAF). The helical transmembrane segment at 186–206 (MGITMLVGITGLFYTQLIGII) threads the bilayer. Topologically, residues 207–265 (TDTTSIEKMSNCCEEISRPRKPWQQTFSEVFGTRWKILWFIPFRRRQPLRVPYHFANHV) are cytoplasmic.

The protein belongs to the DHHC palmitoyltransferase family.

The protein resides in the golgi apparatus membrane. It localises to the golgi apparatus. Its subcellular location is the cis-Golgi network membrane. It is found in the cell membrane. It catalyses the reaction L-cysteinyl-[protein] + hexadecanoyl-CoA = S-hexadecanoyl-L-cysteinyl-[protein] + CoA. Palmitoyltransferase that catalyzes the addition of palmitate onto various protein substrates. Palmitoylates sex steroid hormone receptors, including ESR1, PGR and AR, thereby regulating their targeting to the plasma membrane. This affects rapid intracellular signaling by sex hormones via ERK and AKT kinases and the generation of cAMP, but does not affect that mediated by their nuclear receptor. Palmitoylates FYN, regulates its localization in hair follicles and plays a key role in epidermal homeostasis and hair follicle differentiation. Through the palmitoylation of PLCB1 and the regulation of PLCB1 downstream signaling may indirectly regulate the function of the endothelial barrier and the adhesion of leukocytes to the endothelium. Also has a palmitoyltransferase activity toward ADRA1D, positively regulating its activity and expression and may thereby play a role in vascular contraction. May also palmitoylate eNOS and LCK. The chain is Palmitoyltransferase ZDHHC21 from Bos taurus (Bovine).